Reading from the N-terminus, the 301-residue chain is MSMSHINYNHLYYFWHVYKEGSVVGAAEALYLTPQTITGQIRALEERLQGKLFKRKGRGLEPSELGELVYRYADKMFTLSQEMLDIVNYRKESNLLFDVGVADALSKRLVSSVLNAAVVEGEPIHLRCFESTHEMLLEQLSQHKLDMIISDCPIDSTQQEGLFSVRIGECGVSFWCTNPPPEKPFPACLEERRLLIPGRRSMLGRKLLNWFNSQGLNVEILGEFDDAALMKAFGAMHNAIFVAPTLYAYDFYADKTVVEIGRVENVMEEYHAIFAERMIQHPAVQRICNTDYSALFSPAVR.

One can recognise an HTH lysR-type domain in the interval 6-63 (INYNHLYYFWHVYKEGSVVGAAEALYLTPQTITGQIRALEERLQGKLFKRKGRGLEPS). The segment at residues 23 to 42 (VVGAAEALYLTPQTITGQIR) is a DNA-binding region (H-T-H motif).

This sequence belongs to the LysR transcriptional regulatory family.

It is found in the cytoplasm. In terms of biological role, plays a role in the positive regulation of NhaA. This Escherichia coli (strain K12) protein is Transcriptional activator protein NhaR (nhaR).